The following is a 366-amino-acid chain: Holliday junction branch migration complex subunit RuvB (366 aa).

The disordered stretch occupies residues 1 to 50 (MAIISSKKQPPEPNGEPKQRRESAKAPSTENILKPEAAIDEQEQQEEGIR). Residues 13 to 210 (PNGEPKQRRE…FGLIQKLRFY (198 aa)) are large ATPase domain (RuvB-L). Basic and acidic residues predominate over residues 15–24 (GEPKQRRESA). Residues isoleucine 49, arginine 50, glycine 91, lysine 94, threonine 95, threonine 96, 157–159 (EDY), arginine 200, tyrosine 210, and arginine 247 contribute to the ATP site. Residue threonine 95 coordinates Mg(2+). Residues 211–281 (EVDELTQIVL…IASEALQLFQ (71 aa)) are small ATPAse domain (RuvB-S). Residues 284 to 366 (PCGLDWTDRQ…TPPNEQLSLL (83 aa)) form a head domain (RuvB-H) region. The DNA site is built by arginine 339 and arginine 344.

The protein belongs to the RuvB family. As to quaternary structure, homohexamer. Forms an RuvA(8)-RuvB(12)-Holliday junction (HJ) complex. HJ DNA is sandwiched between 2 RuvA tetramers; dsDNA enters through RuvA and exits via RuvB. An RuvB hexamer assembles on each DNA strand where it exits the tetramer. Each RuvB hexamer is contacted by two RuvA subunits (via domain III) on 2 adjacent RuvB subunits; this complex drives branch migration. In the full resolvosome a probable DNA-RuvA(4)-RuvB(12)-RuvC(2) complex forms which resolves the HJ.

Its subcellular location is the cytoplasm. It catalyses the reaction ATP + H2O = ADP + phosphate + H(+). The RuvA-RuvB-RuvC complex processes Holliday junction (HJ) DNA during genetic recombination and DNA repair, while the RuvA-RuvB complex plays an important role in the rescue of blocked DNA replication forks via replication fork reversal (RFR). RuvA specifically binds to HJ cruciform DNA, conferring on it an open structure. The RuvB hexamer acts as an ATP-dependent pump, pulling dsDNA into and through the RuvAB complex. RuvB forms 2 homohexamers on either side of HJ DNA bound by 1 or 2 RuvA tetramers; 4 subunits per hexamer contact DNA at a time. Coordinated motions by a converter formed by DNA-disengaged RuvB subunits stimulates ATP hydrolysis and nucleotide exchange. Immobilization of the converter enables RuvB to convert the ATP-contained energy into a lever motion, pulling 2 nucleotides of DNA out of the RuvA tetramer per ATP hydrolyzed, thus driving DNA branch migration. The RuvB motors rotate together with the DNA substrate, which together with the progressing nucleotide cycle form the mechanistic basis for DNA recombination by continuous HJ branch migration. Branch migration allows RuvC to scan DNA until it finds its consensus sequence, where it cleaves and resolves cruciform DNA. The polypeptide is Holliday junction branch migration complex subunit RuvB (Nostoc punctiforme (strain ATCC 29133 / PCC 73102)).